The chain runs to 436 residues: 3-ketoacyl-CoA thiolase (436 aa).

The active-site Acyl-thioester intermediate is the cysteine 99. Residues histidine 392 and cysteine 422 each act as proton acceptor in the active site.

The protein belongs to the thiolase-like superfamily. Thiolase family. In terms of assembly, heterotetramer of two alpha chains (FadJ) and two beta chains (FadI).

The protein resides in the cytoplasm. It carries out the reaction an acyl-CoA + acetyl-CoA = a 3-oxoacyl-CoA + CoA. Its pathway is lipid metabolism; fatty acid beta-oxidation. Its function is as follows. Catalyzes the final step of fatty acid oxidation in which acetyl-CoA is released and the CoA ester of a fatty acid two carbons shorter is formed. The polypeptide is 3-ketoacyl-CoA thiolase (Salmonella typhi).